A 337-amino-acid chain; its full sequence is UDP-N-acetylenolpyruvoylglucosamine reductase (337 aa).

Residues isoleucine 17 to arginine 186 form the FAD-binding PCMH-type domain. Residue arginine 162 is part of the active site. Serine 237 functions as the Proton donor in the catalytic mechanism. Residue glutamate 333 is part of the active site.

Belongs to the MurB family. The cofactor is FAD.

It is found in the cytoplasm. The enzyme catalyses UDP-N-acetyl-alpha-D-muramate + NADP(+) = UDP-N-acetyl-3-O-(1-carboxyvinyl)-alpha-D-glucosamine + NADPH + H(+). It functions in the pathway cell wall biogenesis; peptidoglycan biosynthesis. Its function is as follows. Cell wall formation. The protein is UDP-N-acetylenolpyruvoylglucosamine reductase of Flavobacterium johnsoniae (strain ATCC 17061 / DSM 2064 / JCM 8514 / BCRC 14874 / CCUG 350202 / NBRC 14942 / NCIMB 11054 / UW101) (Cytophaga johnsonae).